A 355-amino-acid chain; its full sequence is Uroporphyrinogen decarboxylase (355 aa).

Substrate-binding positions include 27–31, D77, Y154, T209, and H327; that span reads RQAGR.

This sequence belongs to the uroporphyrinogen decarboxylase family. In terms of assembly, homodimer.

The protein localises to the cytoplasm. The enzyme catalyses uroporphyrinogen III + 4 H(+) = coproporphyrinogen III + 4 CO2. It participates in porphyrin-containing compound metabolism; protoporphyrin-IX biosynthesis; coproporphyrinogen-III from 5-aminolevulinate: step 4/4. Its function is as follows. Catalyzes the decarboxylation of four acetate groups of uroporphyrinogen-III to yield coproporphyrinogen-III. This chain is Uroporphyrinogen decarboxylase, found in Yersinia enterocolitica serotype O:8 / biotype 1B (strain NCTC 13174 / 8081).